A 468-amino-acid chain; its full sequence is Two-component response regulator-like APRR9 (468 aa).

The region spanning Arg38–Trp156 is the Response regulatory domain. 2 stretches are compositionally biased toward polar residues: residues His168 to His177 and Asp194 to Asn203. Disordered stretches follow at residues His168–Asn203, Val302–Gln416, and Arg442–Ser468. Residues Thr315 to Thr327 are compositionally biased toward basic and acidic residues. Residues Ser328–Asp364 show a composition bias toward polar residues. Composition is skewed to basic and acidic residues over residues Ser371–Glu382 and Glu400–Lys409. A CCT domain is found at Arg417 to Thr459. The segment covering Arg458 to Ser468 has biased composition (polar residues).

Belongs to the ARR-like family. In terms of processing, phosphorylated. Phosphorylation varies throughout the diurnal cycle.

The protein localises to the nucleus. Its function is as follows. Transcriptional repressor of CCA1 and LHY, and positive regulator of LWD1 and LWD2 expression. Controls photoperiodic flowering response and temperature compensation. Involved in the positive and negative feedback loops of the circadian clock. Expression of several members of the ARR-like family is controlled by circadian rhythm. Regulated at the transcriptional level by a corepressor complex consisting of ELF4, ELF3, and LUX. APRR9, APRR7, and APRR5 coordinately act on the upstream region of the target genes to repress their expression from noon until midnight. The particular coordinated sequential expression of APRR9, APRR7, APRR5, APRR3 and APPR1 result to circadian waves that may be at the basis of the endogenous circadian clock. This is Two-component response regulator-like APRR9 (APRR9) from Arabidopsis thaliana (Mouse-ear cress).